Here is a 546-residue protein sequence, read N- to C-terminus: Chaperonin GroEL (546 aa).

ATP-binding positions include 30 to 33, Lys51, 87 to 91, Gly415, and Asp495; these read TLGP and DGTTT.

It belongs to the chaperonin (HSP60) family. Forms a cylinder of 14 subunits composed of two heptameric rings stacked back-to-back. Interacts with the co-chaperonin GroES.

The protein localises to the cytoplasm. It carries out the reaction ATP + H2O + a folded polypeptide = ADP + phosphate + an unfolded polypeptide.. In terms of biological role, together with its co-chaperonin GroES, plays an essential role in assisting protein folding. The GroEL-GroES system forms a nano-cage that allows encapsulation of the non-native substrate proteins and provides a physical environment optimized to promote and accelerate protein folding. This Brucella ovis (strain ATCC 25840 / 63/290 / NCTC 10512) protein is Chaperonin GroEL.